Consider the following 314-residue polypeptide: Homoserine O-acetyltransferase (314 aa).

Cysteine 142 (acyl-thioester intermediate) is an active-site residue. 2 residues coordinate substrate: lysine 163 and serine 192. Catalysis depends on histidine 235, which acts as the Proton acceptor. Residue glutamate 237 is part of the active site. Arginine 249 serves as a coordination point for substrate.

Belongs to the MetA family.

The protein resides in the cytoplasm. It catalyses the reaction L-homoserine + acetyl-CoA = O-acetyl-L-homoserine + CoA. Its pathway is amino-acid biosynthesis; L-methionine biosynthesis via de novo pathway; O-acetyl-L-homoserine from L-homoserine: step 1/1. Functionally, transfers an acetyl group from acetyl-CoA to L-homoserine, forming acetyl-L-homoserine. The protein is Homoserine O-acetyltransferase of Streptococcus thermophilus (strain ATCC BAA-250 / LMG 18311).